Consider the following 40-residue polypeptide: Large ribosomal subunit protein bL36 (40 aa).

This sequence belongs to the bacterial ribosomal protein bL36 family.

The protein is Large ribosomal subunit protein bL36 of Coxiella burnetii (strain Dugway 5J108-111).